Consider the following 433-residue polypeptide: Enolase (433 aa).

A (2R)-2-phosphoglycerate-binding site is contributed by Gln-167. Glu-209 acts as the Proton donor in catalysis. Mg(2+) contacts are provided by Asp-246, Glu-291, and Asp-318. 4 residues coordinate (2R)-2-phosphoglycerate: Lys-343, Arg-372, Ser-373, and Lys-394. Catalysis depends on Lys-343, which acts as the Proton acceptor.

The protein belongs to the enolase family. Component of the RNA degradosome, a multiprotein complex involved in RNA processing and mRNA degradation. Requires Mg(2+) as cofactor.

It localises to the cytoplasm. The protein localises to the secreted. The protein resides in the cell surface. It carries out the reaction (2R)-2-phosphoglycerate = phosphoenolpyruvate + H2O. Its pathway is carbohydrate degradation; glycolysis; pyruvate from D-glyceraldehyde 3-phosphate: step 4/5. Its function is as follows. Catalyzes the reversible conversion of 2-phosphoglycerate (2-PG) into phosphoenolpyruvate (PEP). It is essential for the degradation of carbohydrates via glycolysis. The polypeptide is Enolase (Edwardsiella ictaluri (strain 93-146)).